The chain runs to 688 residues: Zinc finger CCCH domain-containing protein 22 (688 aa).

The segment at 62–123 (ALLPPPPPPS…QPFSRSNGSV (62 aa)) is disordered. Positions 101 to 117 (PLSASSPSSWAQAQPFS) are enriched in low complexity. Residues 233-260 (GFGWKPCLYYARGFCKNGSSCRFVHGDD) form a C3H1-type zinc finger. In terms of domain architecture, RRM spans 366-442 (RQIYLTFPAD…RVLVKPYKEK (77 aa)). The stretch at 487–522 (TNEMMLRRKLEEQQQAAELQQAIELHSRRLMDLQLL) forms a coiled coil. The segment at 552-624 (LATTMVESPP…PTKSSVSAHQ (73 aa)) is disordered. Positions 574 to 589 (TEERKMVNGGGDKEES) are enriched in basic and acidic residues. A compositionally biased stretch (polar residues) spans 613-624 (ASPTKSSVSAHQ).

The protein is Zinc finger CCCH domain-containing protein 22 of Oryza sativa subsp. japonica (Rice).